The primary structure comprises 488 residues: UDP-N-acetylmuramoyl-L-alanyl-D-glutamate--2,6-diaminopimelate ligase (488 aa).

S31 is a binding site for UDP-N-acetyl-alpha-D-muramoyl-L-alanyl-D-glutamate. Position 109-115 (G109–S115) interacts with ATP. UDP-N-acetyl-alpha-D-muramoyl-L-alanyl-D-glutamate-binding positions include N150, T151 to T152, S178, and R186. K218 is subject to N6-carboxylysine. Residues R384, D408 to R411, G458, and E462 each bind meso-2,6-diaminopimelate. The Meso-diaminopimelate recognition motif signature appears at D408–R411.

It belongs to the MurCDEF family. MurE subfamily. Requires Mg(2+) as cofactor. Post-translationally, carboxylation is probably crucial for Mg(2+) binding and, consequently, for the gamma-phosphate positioning of ATP.

It is found in the cytoplasm. The catalysed reaction is UDP-N-acetyl-alpha-D-muramoyl-L-alanyl-D-glutamate + meso-2,6-diaminopimelate + ATP = UDP-N-acetyl-alpha-D-muramoyl-L-alanyl-gamma-D-glutamyl-meso-2,6-diaminopimelate + ADP + phosphate + H(+). It participates in cell wall biogenesis; peptidoglycan biosynthesis. Functionally, catalyzes the addition of meso-diaminopimelic acid to the nucleotide precursor UDP-N-acetylmuramoyl-L-alanyl-D-glutamate (UMAG) in the biosynthesis of bacterial cell-wall peptidoglycan. This is UDP-N-acetylmuramoyl-L-alanyl-D-glutamate--2,6-diaminopimelate ligase from Bacillus licheniformis (strain ATCC 14580 / DSM 13 / JCM 2505 / CCUG 7422 / NBRC 12200 / NCIMB 9375 / NCTC 10341 / NRRL NRS-1264 / Gibson 46).